The sequence spans 579 residues: GPI alpha-1,2-mannosyltransferase 4 (579 aa).

A run of 8 helical transmembrane segments spans residues 131-151, 156-173, 180-200, 216-236, 258-278, 369-389, 391-411, and 416-436; these read LLLTALSFALDGAVYHLAPPM, WNALALLSGSYVTLVFYT, IEGLLFTWLLVLVSSHVTWGP, LGGIVAAGFFNRPTFLAFAVV, ALVLLPGAALTAAVFVATDSW, YLLLLYFMPLALLSAFSHQEA, FLIPLLVPLVLLCSPQTQPVP, and VVLFNALGALLFGCLHQGGLV.

Belongs to the glycosyltransferase 22 family. PIGZ subfamily. As to expression, widely expressed at low level, with highest level in brain and colon.

Its subcellular location is the endoplasmic reticulum membrane. The protein operates within glycolipid biosynthesis; glycosylphosphatidylinositol-anchor biosynthesis. Functionally, alpha-1,2-mannosyltransferase that catalyzes the transfer of the fourth mannose, via an alpha-1,2 bond, from a dolichol-phosphate-mannose (Dol-P-Man) to an alpha-D-Man-(1-&gt;2)-alpha-D-Man-(1-&gt;6)-2-PEtn-alpha-D-Man-(1-&gt;4)-alpha-D-GlcN-(1-&gt;6)-(1-radyl,2-acyl-sn-glycero-3-phospho)-2-acyl-inositol (also termed H6) intermediate and participates in the twelfth step of the glycosylphosphatidylinositol-anchor biosynthesis. The presence of a fourth mannose in GPI is facultative, suggesting that it only exists in some tissues. The polypeptide is GPI alpha-1,2-mannosyltransferase 4 (Homo sapiens (Human)).